The following is a 156-amino-acid chain: Protein-export protein SecB (156 aa).

Belongs to the SecB family. As to quaternary structure, homotetramer, a dimer of dimers. One homotetramer interacts with 1 SecA dimer.

Its subcellular location is the cytoplasm. One of the proteins required for the normal export of preproteins out of the cell cytoplasm. It is a molecular chaperone that binds to a subset of precursor proteins, maintaining them in a translocation-competent state. It also specifically binds to its receptor SecA. This Xanthobacter autotrophicus (strain ATCC BAA-1158 / Py2) protein is Protein-export protein SecB.